A 1033-amino-acid polypeptide reads, in one-letter code: Kinesin-like protein KIN-4A (1033 aa).

The Kinesin motor domain occupies 11–366; that stretch reads CVKVAVHVRP…LKYANRARNI (356 aa). 89 to 96 contacts ATP; that stretch reads GQTGSGKT. The interval 443–462 is disordered; the sequence is QDGSPCSVESDGLKRNLRSR. Residues 453–462 show a composition bias toward basic and acidic residues; that stretch reads DGLKRNLRSR. Residues 525 to 638 adopt a coiled-coil conformation; sequence ALKQHFGKKI…IKQEAEQFRQ (114 aa). The segment at 763-785 is disordered; that stretch reads DELDSKGPSPSRGKNGCARGSSL. The stretch at 863–895 forms a coiled coil; the sequence is IEIREMKEQLKELVGLLRQSELQRKEVENELKL.

The protein belongs to the TRAFAC class myosin-kinesin ATPase superfamily. Kinesin family. KIN-4 subfamily. In terms of assembly, homodimer. As to expression, expressed in cotton fibers.

It localises to the cytoplasm. In terms of biological role, kinesin-like motor protein involved in the control of the oriented deposition of cellulose microfibrils. This chain is Kinesin-like protein KIN-4A, found in Gossypium hirsutum (Upland cotton).